Here is a 347-residue protein sequence, read N- to C-terminus: Methylthioribose-1-phosphate isomerase (347 aa).

Residues 45–47, arginine 88, and glutamine 197 each bind substrate; that span reads RGA. Catalysis depends on aspartate 238, which acts as the Proton donor. Residue 248 to 249 coordinates substrate; that stretch reads NK.

It belongs to the eIF-2B alpha/beta/delta subunits family. MtnA subfamily.

The catalysed reaction is 5-(methylsulfanyl)-alpha-D-ribose 1-phosphate = 5-(methylsulfanyl)-D-ribulose 1-phosphate. Its pathway is amino-acid biosynthesis; L-methionine biosynthesis via salvage pathway; L-methionine from S-methyl-5-thio-alpha-D-ribose 1-phosphate: step 1/6. Catalyzes the interconversion of methylthioribose-1-phosphate (MTR-1-P) into methylthioribulose-1-phosphate (MTRu-1-P). The protein is Methylthioribose-1-phosphate isomerase of Trichormus variabilis (strain ATCC 29413 / PCC 7937) (Anabaena variabilis).